The chain runs to 343 residues: DNA-directed RNA polymerase subunit alpha (343 aa).

The segment at 1–236 is alpha N-terminal domain (alpha-NTD); the sequence is MQEHYYKFWR…EQLQIFLTFD (236 aa). The segment at 253-343 is alpha C-terminal domain (alpha-CTD); it reads LNENLFRSVD…QPPQKRETQQ (91 aa).

The protein belongs to the RNA polymerase alpha chain family. In terms of assembly, homodimer. The RNAP catalytic core consists of 2 alpha, 1 beta, 1 beta' and 1 omega subunit. When a sigma factor is associated with the core the holoenzyme is formed, which can initiate transcription.

The catalysed reaction is RNA(n) + a ribonucleoside 5'-triphosphate = RNA(n+1) + diphosphate. In terms of biological role, DNA-dependent RNA polymerase catalyzes the transcription of DNA into RNA using the four ribonucleoside triphosphates as substrates. In Bdellovibrio bacteriovorus (strain ATCC 15356 / DSM 50701 / NCIMB 9529 / HD100), this protein is DNA-directed RNA polymerase subunit alpha.